Consider the following 151-residue polypeptide: 3-hydroxyacyl-[acyl-carrier-protein] dehydratase FabZ (151 aa).

The active site involves His-56.

It belongs to the thioester dehydratase family. FabZ subfamily.

The protein localises to the cytoplasm. It catalyses the reaction a (3R)-hydroxyacyl-[ACP] = a (2E)-enoyl-[ACP] + H2O. Involved in unsaturated fatty acids biosynthesis. Catalyzes the dehydration of short chain beta-hydroxyacyl-ACPs and long chain saturated and unsaturated beta-hydroxyacyl-ACPs. This is 3-hydroxyacyl-[acyl-carrier-protein] dehydratase FabZ from Rhodopseudomonas palustris (strain ATCC BAA-98 / CGA009).